Here is a 435-residue protein sequence, read N- to C-terminus: UDP-N-acetylmuramoylalanine--D-glutamate ligase (435 aa).

Position 114–120 (114–120) interacts with ATP; that stretch reads GSNGKST.

It belongs to the MurCDEF family.

It localises to the cytoplasm. It carries out the reaction UDP-N-acetyl-alpha-D-muramoyl-L-alanine + D-glutamate + ATP = UDP-N-acetyl-alpha-D-muramoyl-L-alanyl-D-glutamate + ADP + phosphate + H(+). It functions in the pathway cell wall biogenesis; peptidoglycan biosynthesis. Cell wall formation. Catalyzes the addition of glutamate to the nucleotide precursor UDP-N-acetylmuramoyl-L-alanine (UMA). The sequence is that of UDP-N-acetylmuramoylalanine--D-glutamate ligase from Haemophilus ducreyi (strain 35000HP / ATCC 700724).